We begin with the raw amino-acid sequence, 638 residues long: Protein NSP-INTERACTING KINASE 1 (638 aa).

Positions 1 to 31 (MESTIVMMMMITRSFFCFLGFLCLLCSSVHG) are cleaved as a signal peptide. Over 32 to 248 (LLSPKGVNFE…AGGSRNHKMA (217 aa)) the chain is Extracellular. Residues N92 and N103 are each glycosylated (N-linked (GlcNAc...) asparagine). LRR repeat units lie at residues 104-128 (LTNL…IGRL), 130-152 (RLET…VGYL), 153-175 (QSLQ…SLSN), and 177-200 (TQLA…AAKT). N-linked (GlcNAc...) asparagine glycans are attached at residues N162, N175, N188, N219, and N231. A helical membrane pass occupies residues 249–269 (IAVGSSVGTVSLIFIAVGLFL). The Cytoplasmic segment spans residues 270–638 (WWRQRHNQNT…VQAMELSGPR (369 aa)). T309 is subject to Phosphothreonine. The 282-residue stretch at 312–593 (FSSKNLLGKG…EGDGLAEKWE (282 aa)) folds into the Protein kinase domain. 318 to 326 (LGKGGYGNV) provides a ligand contact to ATP. T335 is modified (phosphothreonine). Residue K340 participates in ATP binding. Phosphoserine is present on residues S393 and S396. Residues 422–502 (YLHEQCDPKI…DVFGFGILLL (81 aa)) form an interaction with geminivirus NSP protein region. Catalysis depends on D435, which acts as the Proton acceptor. T468, T469, and T474 each carry phosphothreonine. Y482 bears the Phosphotyrosine mark. Position 484 is a phosphoserine (S484). T485 is modified (phosphothreonine). Position 489 is a phosphoserine (S489). Phosphothreonine is present on T566.

It belongs to the protein kinase superfamily. Ser/Thr protein kinase family. As to quaternary structure, oligomer. Interacts with geminivirus nuclear shuttle protein (NSP). Interacts with RPL10A and RPL18B. Autophosphorylated. Expressed in seedlings, leaves, roots, stems and flowers.

Its subcellular location is the cell membrane. The catalysed reaction is L-seryl-[protein] + ATP = O-phospho-L-seryl-[protein] + ADP + H(+). It carries out the reaction L-threonyl-[protein] + ATP = O-phospho-L-threonyl-[protein] + ADP + H(+). With respect to regulation, inhibited by the viral nuclear shuttle protein (NSP) that binds to the region required for oligomerization. Involved in defense response to geminivirus and begomovirus infection via regulation of the nuclear trafficking of RPL10A. Phosphorylates RPL10A in vitro. Activation of NIK1 down-regulates cytosolic translation. The protein is Protein NSP-INTERACTING KINASE 1 of Arabidopsis thaliana (Mouse-ear cress).